The following is a 141-amino-acid chain: Large ribosomal subunit protein uL11 (141 aa).

The protein belongs to the universal ribosomal protein uL11 family. Part of the ribosomal stalk of the 50S ribosomal subunit. Interacts with L10 and the large rRNA to form the base of the stalk. L10 forms an elongated spine to which L12 dimers bind in a sequential fashion forming a multimeric L10(L12)X complex. In terms of processing, one or more lysine residues are methylated.

In terms of biological role, forms part of the ribosomal stalk which helps the ribosome interact with GTP-bound translation factors. In Clostridium acetobutylicum (strain ATCC 824 / DSM 792 / JCM 1419 / IAM 19013 / LMG 5710 / NBRC 13948 / NRRL B-527 / VKM B-1787 / 2291 / W), this protein is Large ribosomal subunit protein uL11.